The following is a 23-amino-acid chain: Dermaseptin-4 (23 aa).

Residue Gln23 is modified to Glutamine amide.

As to expression, expressed by the skin glands.

The protein localises to the secreted. Antimicrobial peptide, active against the Gram-positive bacterium S.aureus, and the Gram-negative bacteria E.coli and P.aeruginosa. Has hemolytic activity (5% hemolysis at 128 ug/ml). The sequence is that of Dermaseptin-4 from Phyllomedusa tarsius (Brownbelly leaf frog).